Here is a 3655-residue protein sequence, read N- to C-terminus: NuA4 acetyltransferase complex subunit Tra2 (3655 aa).

Residues 8–2459 (SLSSSIELLK…REYHIRLLGK (2452 aa)) are HEAT. HEAT repeat units follow at residues 46–89 (QLYA…CAHR), 94–131 (QYAQ…TFKF), 149–188 (TNLP…IIQQ), 230–268 (PGVQ…FIEF), 300–338 (LSEK…ILST), 374–412 (STLA…SIGL), 438–475 (FLLL…ETKS), 606–643 (IFLK…STSS), 644–683 (KFLN…VTVS), 735–772 (SLYK…ELCL), 783–820 (PYMS…LTPD), 828–867 (PYIE…RNRK), 1100–1141 (AFIL…QDHS), 1147–1184 (DRQV…QLFR), 1193–1230 (EIAP…LSNT), 1429–1470 (RKLL…LFHL), 1665–1704 (NLVS…FLLK), 1709–1746 (GILL…NVYA), 1753–1790 (IGAL…SEDV), 1808–1846 (QFPY…YIFS), 1891–1934 (EHRG…WNDL), 1973–2011 (SEAI…TDAN), 2036–2073 (ENLS…LSNT), 2120–2157 (DALH…LQIV), 2183–2221 (DQRR…NSPV), and 2401–2438 (DFVL…DEIP). The head stretch occupies residues 2460-3655 (TPNVLETILT…QMDQLWQAWL (1196 aa)). The FAT domain maps to 2484-3045 (LLVYLSKTYG…HFQLRTAYED (562 aa)). Residues 3059–3105 (RGNSRLRENDSSSDNKSKDLSPSGSFSSVSQFNSKNGSPSSIDSSEK) form a disordered region. Over residues 3063–3077 (RLRENDSSSDNKSKD) the composition is skewed to basic and acidic residues. The segment covering 3078 to 3092 (LSPSGSFSSVSQFNS) has biased composition (low complexity). In terms of domain architecture, PI3K/PI4K catalytic spans 3285 to 3625 (VPNVDLVRGH…VISHNVPEDL (341 aa)). The G-loop stretch occupies residues 3291-3297 (VRGHTMC). Residues 3491–3499 (NIGGRSPQK) are catalytic loop. Residues 3511-3536 (SQDLLPSMTSNQPVFHNTEAVPFRLT) are activation loop. One can recognise an FATC domain in the interval 3623-3655 (EDLPLNQTLVDLVSQATNPQQLAQMDQLWQAWL).

This sequence belongs to the PI3/PI4-kinase family. TRA1 subfamily. As to quaternary structure, component of the NuA4 acetyltransferase complex. Tra1 is the scaffold subunit for binding to a variety of transcription activators or transcription factors to recruit NuA4 for targeted gene activation. Requires Hsp90 and its co-chaperone, the Triple-T complex (TTT), for its incorporation into NuA4. Interacts with tel2.

In terms of biological role, component of the NuA4 histone H4/H2A acetyltransferase involved in transcription and DNA repair. In Schizosaccharomyces pombe (strain 972 / ATCC 24843) (Fission yeast), this protein is NuA4 acetyltransferase complex subunit Tra2.